The primary structure comprises 398 residues: MSISKSLVLNEIKKFSPSHIIIGYSGGVDSSVLLNISKELDIPLIAIYINHNLHRDSLKWQIHCQQTCQKYNLQFISHSLDKVPKGESFEAWASKQRMAFFQKIMQQYSKPLLLLGHHQDDQAETFLIQAIRGSGLAGLASIPHYKELHHGGVLRPLLKYSKIDIEGFAKLNNISYIYDDSNEDIKYRRNLIRNQIIPILQQVNPNISQTLSRSANICAESNNILQKLLTERLQSISQDTNLIISELIKLDDDIQKNLLHLWFKQNTQQSLKSKQIKELHLAVNNPSTGWQIDISNYYQIHIQYNQLIIKYPTTINDISKEDIISWLSKNLNEEIDLTKIVIRDRKPDDKCKYRGRNKPNKLKILFQELQIPTTERSKAKIILKDQQIIAVYPFFICG.

25–30 (SGGVDS) contacts ATP.

The protein belongs to the tRNA(Ile)-lysidine synthase family.

The protein resides in the cytoplasm. It carries out the reaction cytidine(34) in tRNA(Ile2) + L-lysine + ATP = lysidine(34) in tRNA(Ile2) + AMP + diphosphate + H(+). Ligates lysine onto the cytidine present at position 34 of the AUA codon-specific tRNA(Ile) that contains the anticodon CAU, in an ATP-dependent manner. Cytidine is converted to lysidine, thus changing the amino acid specificity of the tRNA from methionine to isoleucine. In Francisella tularensis subsp. holarctica (strain OSU18), this protein is tRNA(Ile)-lysidine synthase.